Reading from the N-terminus, the 126-residue chain is MSNVPADLKYTDEHEWIRTEADGTLTVGITDHAQSTLGDIVFLELPEVGKSVNAGDAVGVVESVKAASDIYSPVSGEVVAVNEAATDAPEEVNGDAYGVWLFKIKLAAGASTDKLIDADAYSKLID.

One can recognise a Lipoyl-binding domain in the interval 24–105 (TLTVGITDHA…AYGVWLFKIK (82 aa)). Position 65 is an N6-lipoyllysine (Lys-65).

This sequence belongs to the GcvH family. As to quaternary structure, the glycine cleavage system is composed of four proteins: P, T, L and H. The cofactor is (R)-lipoate.

The glycine cleavage system catalyzes the degradation of glycine. The H protein shuttles the methylamine group of glycine from the P protein to the T protein. This Burkholderia cenocepacia (strain HI2424) protein is Glycine cleavage system H protein.